The primary structure comprises 232 residues: Ribonuclease 3 (232 aa).

The region spanning 5-134 (QTVLKNHFAI…FLGALLLDKD (130 aa)) is the RNase III domain. E47 is a binding site for Mg(2+). Residue D51 is part of the active site. Mg(2+) is bound by residues D120 and E123. Residue E123 is part of the active site. One can recognise a DRBM domain in the interval 160–229 (DYKTHLQELL…AKNAVEKGLD (70 aa)).

Belongs to the ribonuclease III family. Homodimer. It depends on Mg(2+) as a cofactor.

It is found in the cytoplasm. It carries out the reaction Endonucleolytic cleavage to 5'-phosphomonoester.. Digests double-stranded RNA. Involved in the processing of primary rRNA transcript to yield the immediate precursors to the large and small rRNAs (23S and 16S). Processes some mRNAs, and tRNAs when they are encoded in the rRNA operon. Processes pre-crRNA and tracrRNA of type II CRISPR loci if present in the organism. This is Ribonuclease 3 from Streptococcus pneumoniae (strain Taiwan19F-14).